A 555-amino-acid polypeptide reads, in one-letter code: Solute carrier family 22 member 2 (555 aa).

The Cytoplasmic segment spans residues 1 to 21 (MSTVDDILEHIGEFHLFQKQT). The chain crosses the membrane as a helical span at residues 22–42 (FFLLALLSGAFTPIYVGIVFL). The Extracellular portion of the chain corresponds to 43–150 (GFTPDHHCWS…LVCAHSWMLD (108 aa)). N-linked (GlcNAc...) asparagine glycosylation occurs at Asn-71. Residues 151–171 (LFQSVVNVGFFIGAMMIGYLA) traverse the membrane as a helical segment. At 172 to 177 (DRFGRK) the chain is on the cytoplasmic side. The chain crosses the membrane as a helical span at residues 178–198 (FCLLVTILINAISGALMAISP). The Extracellular portion of the chain corresponds to 199 to 210 (NYAWMLVFRFLQ). Residues 211 to 231 (GLVSKAGWLIGYILITEFVGL) traverse the membrane as a helical segment. Residues 232–238 (GYRRMVG) are Cytoplasmic-facing. The chain crosses the membrane as a helical span at residues 239–259 (ICYQIAFTVGLLILAGVAYVI). The Extracellular portion of the chain corresponds to 260–263 (PNWR). Residues 264-284 (WLQFAVTLPNFCFLLYFWCIP) form a helical membrane-spanning segment. A Proline-rich sequence motif is present at residues 284 to 288 (PESPR). At 285 to 348 (ESPRWLISQN…VRTPQIRKHT (64 aa)) the chain is on the cytoplasmic side. The helical transmembrane segment at 349-369 (LILMYNWFTSSVLYQGLIMHM) threads the bilayer. Over 370 to 375 (GLAGDN) the chain is Extracellular. The helical transmembrane segment at 376 to 396 (IYLDFFYSALVEFPAAFIIIL) threads the bilayer. Residues 397-404 (TIDRVGRR) are Cytoplasmic-facing. Residues 405–425 (YPWAVSNMVAGAACLASVFIP) form a helical membrane-spanning segment. At 426 to 432 (DDLQWLK) the chain is on the extracellular side. The helical transmembrane segment at 433-453 (ITIACLGRMGITMAYEMVCLV) threads the bilayer. At 454–464 (NAELYPTYIRN) the chain is on the cytoplasmic side. The helical transmembrane segment at 465–485 (LGVLVCSSMCDIGGIITPFLV) threads the bilayer. The Extracellular portion of the chain corresponds to 486–494 (YRLTDIWME). Residues 495–515 (FPLVVFAVVGLVAGALVLLLP) traverse the membrane as a helical segment. The Cytoplasmic segment spans residues 516–555 (ETKGKALPETIEDAENMQRPRKKKEKRIYLQVKQADRPLS).

The protein belongs to the major facilitator (TC 2.A.1) superfamily. Organic cation transporter (TC 2.A.1.19) family. Tyrosine phosphorylated. As to expression, expressed in the kidney, in the proximal tubules of cortex and of the outer medulla. In brain, highly expressed predominantly in regions located at the brain-cerebrospinal fluid border, in the leptomeninges, in the choroid plexus and in a layer boarding the third ventricle. In brain, also observed in the granular cell layer of the cerebellum and in the granular layer and pyramidal cells of the hippocampus in the CA1-CA3 regions. Expressed in tracheal and bronchial ciliated epithelium in the respiratory tract. Expression is greater in the kidney of male than of female.

The protein resides in the basolateral cell membrane. It localises to the basal cell membrane. Its subcellular location is the apical cell membrane. It carries out the reaction (R)-noradrenaline(out) = (R)-noradrenaline(in). The catalysed reaction is (R)-adrenaline(out) = (R)-adrenaline(in). The enzyme catalyses serotonin(out) = serotonin(in). It catalyses the reaction dopamine(out) = dopamine(in). It carries out the reaction histamine(out) = histamine(in). The catalysed reaction is thiamine(in) = thiamine(out). The enzyme catalyses creatinine(in) = creatinine(out). It catalyses the reaction 1-methylnicotinamide(out) = 1-methylnicotinamide(in). It carries out the reaction guanidine(out) = guanidine(in). The catalysed reaction is choline(out) = choline(in). The enzyme catalyses agmatine(out) = agmatine(in). It catalyses the reaction putrescine(out) = putrescine(in). It carries out the reaction spermidine(in) = spermidine(out). The catalysed reaction is tyramine(in) = tyramine(out). The enzyme catalyses L-histidyl-L-proline diketopiperazine(in) = L-histidyl-L-proline diketopiperazine(out). It catalyses the reaction (R)-salsolinol(in) = (R)-salsolinol(out). It carries out the reaction N-methyl-(R)-salsolinol(in) = N-methyl-(R)-salsolinol(out). The catalysed reaction is acetylcholine(in) = acetylcholine(out). The enzyme catalyses prostaglandin F2alpha(out) = prostaglandin F2alpha(in). It catalyses the reaction prostaglandin E2(out) = prostaglandin E2(in). Tyrosine phosphorylation of the transporter leads to activation of the transport activity. Inhibited by cGMP, most likely through a cGMP-binding protein that interacts with OCT2. In terms of biological role, electrogenic voltage-dependent transporter that mediates the transport of a variety of organic cations such as endogenous bioactive amines, cationic drugs and xenobiotics. Functions as a Na(+)-independent, bidirectional uniporter. Cation cellular uptake or release is driven by the electrochemical potential, i.e. membrane potential and concentration gradient. However, may also engage electroneutral cation exchange when saturating concentrations of cation substrates are reached. Predominantly expressed at the basolateral membrane of hepatocytes and proximal tubules and involved in the uptake and disposition of cationic compounds by hepatic and renal clearance from the blood flow. Implicated in monoamine neurotransmitters uptake such as histamine, dopamine, adrenaline/epinephrine, noradrenaline/norepinephrine, serotonin and tyramine, thereby supporting a physiological role in the central nervous system by regulating interstitial concentrations of neurotransmitters. Also capable of transporting dopaminergic neuromodulators cyclo(his-pro), salsolinol and N-methyl-salsolinol, thereby involved in the maintenance of dopaminergic cell integrity in the central nervous system. Mediates the bidirectional transport of acetylcholine (ACh) at the apical membrane of ciliated cell in airway epithelium, thereby playing a role in luminal release of ACh from bronchial epithelium. Also transports guanidine and endogenous monoamines such as vitamin B1/thiamine, creatinine and N-1-methylnicotinamide (NMN). Mediates the uptake and efflux of quaternary ammonium compound choline. Mediates the bidirectional transport of polyamine agmatine and the uptake of polyamine putrescine. Able to transport non-amine endogenous compounds such as prostaglandin E2 (PGE2) and prostaglandin F2-alpha (PGF2-alpha). Also involved in the uptake of xenobiotic 4-(4-(dimethylamino)styryl)-N-methylpyridinium (ASP). May contribute to regulate the transport of organic compounds in testis across the blood-testis-barrier. The protein is Solute carrier family 22 member 2 of Rattus norvegicus (Rat).